We begin with the raw amino-acid sequence, 145 residues long: Large ribosomal subunit protein uL11 (145 aa).

The protein belongs to the universal ribosomal protein uL11 family. As to quaternary structure, part of the ribosomal stalk of the 50S ribosomal subunit. Interacts with L10 and the large rRNA to form the base of the stalk. L10 forms an elongated spine to which L12 dimers bind in a sequential fashion forming a multimeric L10(L12)X complex. Post-translationally, one or more lysine residues are methylated.

Forms part of the ribosomal stalk which helps the ribosome interact with GTP-bound translation factors. This Sulfurihydrogenibium sp. (strain YO3AOP1) protein is Large ribosomal subunit protein uL11.